A 130-amino-acid chain; its full sequence is Small ribosomal subunit protein uS8 (130 aa).

The protein belongs to the universal ribosomal protein uS8 family. Part of the 30S ribosomal subunit. Contacts proteins S5 and S12.

In terms of biological role, one of the primary rRNA binding proteins, it binds directly to 16S rRNA central domain where it helps coordinate assembly of the platform of the 30S subunit. This Acidiphilium cryptum (strain JF-5) protein is Small ribosomal subunit protein uS8.